We begin with the raw amino-acid sequence, 330 residues long: MVEIYYDDDASLDVLAGRKVAVIGYGSQGHAHALNLRDSGVDVRVGLPADSRSRAKAAEEGLRVLTPAEASAEADIIMLLTPDTTHRKIYADSIAPHLSEGKALAFGHGFNIRYGLIEPPAGVDVFMVAPKGPGHLVRRVFEEGKGVPVLVAVENDASGNALAVALAYAKGIGGTRAGALRTTFTEETETDLFGEQAVLCGGASALVQAGFETLVEAGYTPEVAYFECLHELKLIVDLMYEGGISQMRYSISDTAEYGDVTRGPRVVTPAVKAEMRKILDEIRDGTFAREWVAEDDNGRPNFTKLVEEGKQHPIEQVGAKLRPLMSWIAK.

The KARI N-terminal Rossmann domain occupies Val2–Thr182. NADP(+) contacts are provided by residues Tyr25–Gln28, Ser51, and Ser53. The active site involves His108. Gly134 provides a ligand contact to NADP(+). In terms of domain architecture, KARI C-terminal knotted spans Thr183–Ile328. 4 residues coordinate Mg(2+): Asp191, Glu195, Glu227, and Glu231. Substrate is bound at residue Ser252.

This sequence belongs to the ketol-acid reductoisomerase family. Mg(2+) is required as a cofactor.

It catalyses the reaction (2R)-2,3-dihydroxy-3-methylbutanoate + NADP(+) = (2S)-2-acetolactate + NADPH + H(+). The enzyme catalyses (2R,3R)-2,3-dihydroxy-3-methylpentanoate + NADP(+) = (S)-2-ethyl-2-hydroxy-3-oxobutanoate + NADPH + H(+). It functions in the pathway amino-acid biosynthesis; L-isoleucine biosynthesis; L-isoleucine from 2-oxobutanoate: step 2/4. The protein operates within amino-acid biosynthesis; L-valine biosynthesis; L-valine from pyruvate: step 2/4. Involved in the biosynthesis of branched-chain amino acids (BCAA). Catalyzes an alkyl-migration followed by a ketol-acid reduction of (S)-2-acetolactate (S2AL) to yield (R)-2,3-dihydroxy-isovalerate. In the isomerase reaction, S2AL is rearranged via a Mg-dependent methyl migration to produce 3-hydroxy-3-methyl-2-ketobutyrate (HMKB). In the reductase reaction, this 2-ketoacid undergoes a metal-dependent reduction by NADPH to yield (R)-2,3-dihydroxy-isovalerate. The sequence is that of Ketol-acid reductoisomerase (NADP(+)) from Frankia alni (strain DSM 45986 / CECT 9034 / ACN14a).